The following is a 515-amino-acid chain: Glucose-6-phosphate 1-dehydrogenase X (515 aa).

N-acetylalanine is present on Ala2. Residues 38-45 (GASGDLAK), Arg72, Tyr147, and Lys171 contribute to the NADP(+) site. D-glucose 6-phosphate contacts are provided by residues Lys171, 201–205 (HYLGK), Glu239, and Asp258. The Proton acceptor role is filled by His263. Arg357 lines the NADP(+) pocket. D-glucose 6-phosphate contacts are provided by Lys360 and Arg365. Positions 366, 370, and 393 each coordinate NADP(+). Residue Gln395 participates in D-glucose 6-phosphate binding. NADP(+)-binding positions include 401–403 (YTK), 421–423 (DLT), Arg487, and Tyr503. At Tyr507 the chain carries Phosphotyrosine. Position 509 (Trp509) interacts with NADP(+).

Belongs to the glucose-6-phosphate dehydrogenase family. As to quaternary structure, homotetramer; dimer of dimers. Interacts with SIRT2; the interaction is enhanced by H(2)O(2) treatment. Forms a ternary complex with ALDOB and TP53; this interaction is direct. ALDOB stabilizes the complex inhibiting G6PD activity and keeping oxidative pentose phosphate metabolism in check. Post-translationally, acetylated by ELP3 at Lys-403; acetylation inhibits its homodimerization and enzyme activity. Deacetylated by SIRT2 at Lys-403; deacetylation stimulates its enzyme activity.

It is found in the cytoplasm. The protein resides in the cytosol. The protein localises to the membrane. The catalysed reaction is D-glucose 6-phosphate + NADP(+) = 6-phospho-D-glucono-1,5-lactone + NADPH + H(+). It participates in carbohydrate degradation; pentose phosphate pathway; D-ribulose 5-phosphate from D-glucose 6-phosphate (oxidative stage): step 1/3. In terms of biological role, catalyzes the rate-limiting step of the oxidative pentose-phosphate pathway, which represents a route for the dissimilation of carbohydrates besides glycolysis. The main function of this enzyme is to provide reducing power (NADPH) and pentose phosphates for fatty acid and nucleic acid synthesis. This chain is Glucose-6-phosphate 1-dehydrogenase X (G6pdx), found in Mus musculus (Mouse).